An 89-amino-acid polypeptide reads, in one-letter code: Toxin To14 (89 aa).

The N-terminal stretch at 1 to 19 (MNCLMLIFVVFLLAFGVEC) is a signal peptide. Residues 21-85 (KDDYPVDTAK…SPTKTSGRCN (65 aa)) enclose the LCN-type CS-alpha/beta domain. 4 cysteine pairs are disulfide-bonded: Cys33/Cys84, Cys37/Cys60, Cys46/Cys67, and Cys50/Cys69.

Expressed by the venom gland.

Its subcellular location is the secreted. Inhibits voltage-gated sodium channels (Nav). In Tityus obscurus (Amazonian scorpion), this protein is Toxin To14.